The following is a 349-amino-acid chain: Shematrin-like protein 1 (349 aa).

A signal peptide spans 1-16 (MLKLVCAVFLIATVSA).

In terms of tissue distribution, prismatic layer of shell (at protein level).

Its subcellular location is the secreted. The sequence is that of Shematrin-like protein 1 from Margaritifera margaritifera (Freshwater pearl mussel).